Reading from the N-terminus, the 386-residue chain is Succinate--CoA ligase [ADP-forming] subunit beta (386 aa).

Residues 9–244 form the ATP-grasp domain; sequence KEILRKYGVP…HDEEDPLETR (236 aa). ATP contacts are provided by residues Lys-46, 53-55, Glu-99, Cys-102, and Glu-107; that span reads GRG. The Mg(2+) site is built by Asn-199 and Asp-213. Substrate contacts are provided by residues Asn-264 and 321–323; that span reads GIM.

It belongs to the succinate/malate CoA ligase beta subunit family. In terms of assembly, heterotetramer of two alpha and two beta subunits. Requires Mg(2+) as cofactor.

It catalyses the reaction succinate + ATP + CoA = succinyl-CoA + ADP + phosphate. It carries out the reaction GTP + succinate + CoA = succinyl-CoA + GDP + phosphate. It participates in carbohydrate metabolism; tricarboxylic acid cycle; succinate from succinyl-CoA (ligase route): step 1/1. Functionally, succinyl-CoA synthetase functions in the citric acid cycle (TCA), coupling the hydrolysis of succinyl-CoA to the synthesis of either ATP or GTP and thus represents the only step of substrate-level phosphorylation in the TCA. The beta subunit provides nucleotide specificity of the enzyme and binds the substrate succinate, while the binding sites for coenzyme A and phosphate are found in the alpha subunit. This chain is Succinate--CoA ligase [ADP-forming] subunit beta, found in Rickettsia prowazekii (strain Madrid E).